The sequence spans 360 residues: Phospho-N-acetylmuramoyl-pentapeptide-transferase (360 aa).

Helical transmembrane passes span 2–22, 26–46, 73–93, 97–117, 134–154, 168–188, 199–219, 236–256, 263–283, 288–308, and 339–359; these read LVWV…FQYL, AILG…VMIR, TMGG…WADL, YVLI…VDDW, YFWQ…TAHL, ITLA…VGGS, GLAI…AYLS, TGEL…FLWF, VFMG…VAVI, LVFF…ILQV, and IVRF…TLKI.

This sequence belongs to the glycosyltransferase 4 family. MraY subfamily. Requires Mg(2+) as cofactor.

Its subcellular location is the cell inner membrane. The enzyme catalyses UDP-N-acetyl-alpha-D-muramoyl-L-alanyl-gamma-D-glutamyl-meso-2,6-diaminopimeloyl-D-alanyl-D-alanine + di-trans,octa-cis-undecaprenyl phosphate = di-trans,octa-cis-undecaprenyl diphospho-N-acetyl-alpha-D-muramoyl-L-alanyl-D-glutamyl-meso-2,6-diaminopimeloyl-D-alanyl-D-alanine + UMP. The protein operates within cell wall biogenesis; peptidoglycan biosynthesis. Catalyzes the initial step of the lipid cycle reactions in the biosynthesis of the cell wall peptidoglycan: transfers peptidoglycan precursor phospho-MurNAc-pentapeptide from UDP-MurNAc-pentapeptide onto the lipid carrier undecaprenyl phosphate, yielding undecaprenyl-pyrophosphoryl-MurNAc-pentapeptide, known as lipid I. The sequence is that of Phospho-N-acetylmuramoyl-pentapeptide-transferase from Hahella chejuensis (strain KCTC 2396).